A 173-amino-acid polypeptide reads, in one-letter code: Large ribosomal subunit protein uL10 (173 aa).

Belongs to the universal ribosomal protein uL10 family. Part of the ribosomal stalk of the 50S ribosomal subunit. The N-terminus interacts with L11 and the large rRNA to form the base of the stalk. The C-terminus forms an elongated spine to which L12 dimers bind in a sequential fashion forming a multimeric L10(L12)X complex.

Functionally, forms part of the ribosomal stalk, playing a central role in the interaction of the ribosome with GTP-bound translation factors. This chain is Large ribosomal subunit protein uL10, found in Bifidobacterium animalis subsp. lactis (strain AD011).